Consider the following 368-residue polypeptide: Ubl carboxyl-terminal hydrolase 18 (368 aa).

The mediates interaction with IFNAR2 stretch occupies residues 31–48 (MKRKRVLSRDLCSAWDSP). A mediates interaction with STAT2 region spans residues 48–109 (PHGLVGLHNI…LLLLLEKMQD (62 aa)). The 315-residue stretch at 52–366 (VGLHNIGQTC…TAYLLVYTKT (315 aa)) folds into the USP domain. Cysteine 61 (nucleophile) is an active-site residue. Residues 299-308 (ELFAVIAHVG) form a mediates interaction with STAT2 and necessary for the negative regulation of the type I IFN signaling pathway region. The mediates interaction with IFNAR2 stretch occupies residues 309–368 (MADFGHYCAYIRNPVDGKWFCFNDSHVCWVTWKDVQCTYGNHRYRWRETAYLLVYTKTGS). Histidine 314 functions as the Proton acceptor in the catalytic mechanism.

The protein belongs to the peptidase C19 family. In terms of assembly, interacts with STAT2; the interaction is direct. Interacts with IFNAR2; indirectly via STAT2, it negatively regulates the assembly of the ternary interferon-IFNAR1-IFNAR2 complex and inhibits type I interferon signaling. Interacts with STING1. Interacts with USP20.

It catalyses the reaction Thiol-dependent hydrolysis of ester, thioester, amide, peptide and isopeptide bonds formed by the C-terminal Gly of ubiquitin (a 76-residue protein attached to proteins as an intracellular targeting signal).. Its function is as follows. Interferon-induced ISG15-specific protease that plays a crucial role for maintaining a proper balance of ISG15-conjugated proteins in cells. Regulates protein ISGylation by efficiently cleaving ISG15 conjugates linked via isopeptide bonds. Regulates T-cell activation and T-helper 17 (Th17) cell differentiation by deubiquitinating TAK1, likely to keep TAK1-TAB complexes in steady conditions. In turn, restricts activation of NF-kappa-B, NFAT, and JNK as well as expression of IL2 in T-cells after TCR activation. Acts as a molecular adapter with USP20 to promote innate antiviral response through deubiquitinating STING1. Involved also in the negative regulation of the inflammatory response triggered by type I interferon. Upon recruitment by STAT2 to the type I interferon receptor subunit IFNAR2 interferes with the assembly of the ternary interferon-IFNAR1-IFNAR2 complex and acts as a negative regulator of the type I interferon signaling pathway. The chain is Ubl carboxyl-terminal hydrolase 18 (Usp18) from Mus musculus (Mouse).